The chain runs to 346 residues: MMDKFRMIFQFLQSNQESFMNGICGIMALASAQMYSAFDFNCPCLPGYNAAYSAGILLAPPLVLFLLGLVMNNNVSMLAEEWKRPLGRRAKDPAVLRYMFCSMAQRALIAPVVWVAVTLLDGKCFLCAFCTAVPVSALGNGSLAPGLPAPELARLLARVPCPEIYDGDWLLAREVAVRYLRCISQALGWSFVLLTTLLAFVVRSVRPCFTQAAFLKSKYWSHYIDIERKLFDETCTEHAKAFAKVCIQQFFEAMNHDLELGHTHGTLATAPASAAAPTTPDGAEEEREKLRGITDQGTMNRLLTSWHKCKPPLRLGQEEPPLMGNGWAGGGPRPPRKEVATYFSKV.

The Cytoplasmic segment spans residues 1-21 (MMDKFRMIFQFLQSNQESFMN). Positions 10-37 (QFLQSNQESFMNGICGIMALASAQMYSA) are central pore. The helical transmembrane segment at 22–37 (GICGIMALASAQMYSA) threads the bilayer. Residues 38-49 (FDFNCPCLPGYN) lie on the Extracellular side of the membrane. 2 cysteine pairs are disulfide-bonded: C42/C127 and C44/C161. Residues 50-72 (AAYSAGILLAPPLVLFLLGLVMN) traverse the membrane as a helical segment. Residues 63-70 (VLFLLGLV) are phospholipid-binding. Residues 73 to 99 (NNVSMLAEEWKRPLGRRAKDPAVLRYM) lie on the Cytoplasmic side of the membrane. A helical transmembrane segment spans residues 100-125 (FCSMAQRALIAPVVWVAVTLLDGKCF). The S-palmitoyl cysteine moiety is linked to residue C101. Residues 105–117 (QRALIAPVVWVAV) are phospholipid-binding. At 126–180 (LCAFCTAVPVSALGNGSLAPGLPAPELARLLARVPCPEIYDGDWLLAREVAVRYL) the chain is on the extracellular side. N140 is a glycosylation site (N-linked (GlcNAc...) asparagine). A helical transmembrane segment spans residues 181-206 (RCISQALGWSFVLLTTLLAFVVRSVR). The phospholipid-binding stretch occupies residues 192-202 (VLLTTLLAFVV). The Cytoplasmic segment spans residues 207–346 (PCFTQAAFLK…KEVATYFSKV (140 aa)). C208 is lipidated: S-palmitoyl cysteine. Residues 313-346 (LRLGQEEPPLMGNGWAGGGPRPPRKEVATYFSKV) are disordered.

The protein belongs to the CALHM family. Oligomerizes to form hexamers and octamers. Does not form gap junctions. Associates with CALHM3 as a pore-forming subunit in a hetero-hexameric channel complex. Post-translationally, N-glycosylated. Assembly with CALHM3 is associated with N-glycan remodeling and formation of hybrid complex- and high mannose-type glycochains. This N-glycan processing regulates channel trafficking and gating kinetics. In terms of processing, palmitoylated by ZDHHC3, ZDHHC20 and possibly ZDHHC7. Palmitoylation regulates voltage-dependent gating of the channel by shifting it toward more depolarized potentials. As to expression, predominantly expressed in adult brain. Detected also in retinoic acid-differentiated SH-SY5Y cells. Specifically expressed in circumvallate taste bud cells.

Its subcellular location is the cell membrane. It localises to the endoplasmic reticulum membrane. The protein localises to the basolateral cell membrane. The catalysed reaction is ATP(in) = ATP(out). It catalyses the reaction Ca(2+)(in) = Ca(2+)(out). The enzyme catalyses Mg(2+)(in) = Mg(2+)(out). It carries out the reaction Na(+)(in) = Na(+)(out). The catalysed reaction is K(+)(in) = K(+)(out). It catalyses the reaction Li(+)(in) = Li(+)(out). The enzyme catalyses Rb(+)(in) = Rb(+)(out). It carries out the reaction Cs(+)(in) = Cs(+)(out). The catalysed reaction is chloride(in) = chloride(out). Its activity is regulated as follows. Regulated by membrane voltage and extracellular Ca(2+). Inhibited by Gd(3+), ruthenium red, and Zn(2+) and partially inhibited by 2-aminoethoxydiphenyl borate. Its function is as follows. Pore-forming subunit of gustatory voltage-gated ion channels required for sensory perception of sweet, bitter and umami tastes. With CALHM3 forms a fast-activating voltage-gated ATP-release channel in type II taste bud cells, ATP acting as a neurotransmitter to activate afferent neural gustatory pathways. Acts both as a voltage-gated and calcium-activated ion channel: mediates neuronal excitability in response to membrane depolarization and low extracellular Ca(2+) concentration. Has poor ion selectivity and forms a wide pore (around 14 Angstroms) that mediates permeation of small ions including Ca(2+), Na(+), K(+) and Cl(-), as well as larger ions such as ATP(4-). Mediates Ca(2+) influx and downstream activation of the ERK1 and ERK2 cascade in neurons. Triggers endoplasmic reticulum stress by reducing the Ca(2+) content of the endoplasmic reticulum. May indirectly control amyloid precursor protein (APP) proteolysis and aggregated amyloid-beta (Abeta) peptides levels in a Ca(2+)-dependent manner. In Homo sapiens (Human), this protein is Calcium homeostasis modulator protein 1.